Consider the following 173-residue polypeptide: Ribosome maturation factor RimM (173 aa).

The 73-residue stretch at 98–170 (EGEFYWCDLI…IMTVSPTEGL (73 aa)) folds into the PRC barrel domain.

Belongs to the RimM family. In terms of assembly, binds ribosomal protein uS19.

The protein resides in the cytoplasm. In terms of biological role, an accessory protein needed during the final step in the assembly of 30S ribosomal subunit, possibly for assembly of the head region. Essential for efficient processing of 16S rRNA. May be needed both before and after RbfA during the maturation of 16S rRNA. It has affinity for free ribosomal 30S subunits but not for 70S ribosomes. This Geobacter metallireducens (strain ATCC 53774 / DSM 7210 / GS-15) protein is Ribosome maturation factor RimM.